The chain runs to 72 residues: Translation initiation factor IF-1 (72 aa).

Residues 1-72 (MSKDDCIEFE…TKGRIIYRMK (72 aa)) enclose the S1-like domain.

It belongs to the IF-1 family. As to quaternary structure, component of the 30S ribosomal translation pre-initiation complex which assembles on the 30S ribosome in the order IF-2 and IF-3, IF-1 and N-formylmethionyl-tRNA(fMet); mRNA recruitment can occur at any time during PIC assembly.

It is found in the cytoplasm. Its function is as follows. One of the essential components for the initiation of protein synthesis. Stabilizes the binding of IF-2 and IF-3 on the 30S subunit to which N-formylmethionyl-tRNA(fMet) subsequently binds. Helps modulate mRNA selection, yielding the 30S pre-initiation complex (PIC). Upon addition of the 50S ribosomal subunit IF-1, IF-2 and IF-3 are released leaving the mature 70S translation initiation complex. The chain is Translation initiation factor IF-1 from Xylella fastidiosa (strain 9a5c).